Consider the following 389-residue polypeptide: MLGATPAAAGVAEHVTEPVAYDAILLAGFGGPEGQDDVIPFLRNVTRGRGILDERLEEVAQHYRHFGGVSPINDQNRALKAALEAELASRGIDLPVLWGNRNWDPYLADALTEADQRGFTKLIAVATSAYSSYSSCRQYREDFARALRETGLEGRIQIDKVRQFFDHPGFVEPFIEGVKNAVEELRERAPEIHPATGVRILFSTHSIPSTDAGKSGPSGRPDSGEPWGEGGAYAAQHLAVAEIVSHEATGGTIGWDLVYQSRSGPPSMPWLEPDINDRIAELPELGVKAIIIVPLGFVSDHMEVLWDLDTEAMESSEENGLLAVRVPTPGTHAKYVKGLVDLVLERRDGLPVAQRPSLTTLGPWYDVCRPGCCENVRLGFKPAVAGLTP.

Residues S70 and Y139 each coordinate Fe-coproporphyrin III. Fe(2+) is bound at residue H205. The tract at residues 207–229 (IPSTDAGKSGPSGRPDSGEPWGE) is disordered. E303 contacts Fe(2+).

This sequence belongs to the ferrochelatase family.

The protein localises to the cytoplasm. It catalyses the reaction Fe-coproporphyrin III + 2 H(+) = coproporphyrin III + Fe(2+). Its pathway is porphyrin-containing compound metabolism; protoheme biosynthesis. Functionally, involved in coproporphyrin-dependent heme b biosynthesis. Catalyzes the insertion of ferrous iron into coproporphyrin III to form Fe-coproporphyrin III. This is Coproporphyrin III ferrochelatase from Leifsonia xyli subsp. xyli (strain CTCB07).